Consider the following 250-residue polypeptide: Pyrroloquinoline-quinone synthase (250 aa).

This sequence belongs to the PqqC family.

It carries out the reaction 6-(2-amino-2-carboxyethyl)-7,8-dioxo-1,2,3,4,7,8-hexahydroquinoline-2,4-dicarboxylate + 3 O2 = pyrroloquinoline quinone + 2 H2O2 + 2 H2O + H(+). Its pathway is cofactor biosynthesis; pyrroloquinoline quinone biosynthesis. Its function is as follows. Ring cyclization and eight-electron oxidation of 3a-(2-amino-2-carboxyethyl)-4,5-dioxo-4,5,6,7,8,9-hexahydroquinoline-7,9-dicarboxylic-acid to PQQ. The chain is Pyrroloquinoline-quinone synthase from Xanthomonas oryzae pv. oryzae (strain MAFF 311018).